The primary structure comprises 422 residues: 3-isopropylmalate dehydratase large subunit (422 aa).

[4Fe-4S] cluster-binding residues include cysteine 294, cysteine 354, and cysteine 357.

The protein belongs to the aconitase/IPM isomerase family. LeuC type 2 subfamily. In terms of assembly, heterodimer of LeuC and LeuD. Requires [4Fe-4S] cluster as cofactor.

It carries out the reaction (2R,3S)-3-isopropylmalate = (2S)-2-isopropylmalate. Its pathway is amino-acid biosynthesis; L-leucine biosynthesis; L-leucine from 3-methyl-2-oxobutanoate: step 2/4. Its function is as follows. Catalyzes the isomerization between 2-isopropylmalate and 3-isopropylmalate, via the formation of 2-isopropylmaleate. This is 3-isopropylmalate dehydratase large subunit from Mycolicibacterium smegmatis (strain ATCC 700084 / mc(2)155) (Mycobacterium smegmatis).